A 289-amino-acid chain; its full sequence is Glucosamine-6-phosphate deaminase 1 (289 aa).

An N6-acetyllysine modification is found at Lys-64. The active-site Proton acceptor; for enolization step is the Asp-72. Residue Asp-141 is the For ring-opening step of the active site. His-143 acts as the Proton acceptor; for ring-opening step in catalysis. Glu-148 (for ring-opening step) is an active-site residue. Thr-161 is subject to Phosphothreonine.

Belongs to the glucosamine/galactosamine-6-phosphate isomerase family. In terms of assembly, homohexamer. At the equatorial segment of the sperm head.

Its subcellular location is the cytoplasm. The catalysed reaction is alpha-D-glucosamine 6-phosphate + H2O = beta-D-fructose 6-phosphate + NH4(+). Its pathway is nucleotide-sugar biosynthesis; UDP-N-acetyl-alpha-D-glucosamine biosynthesis; alpha-D-glucosamine 6-phosphate from D-fructose 6-phosphate: step 1/1. Allosterically activated by N-acetylglucosamine-6-phosphate (GlcNAc6P). In terms of biological role, catalyzes the reversible conversion of alpha-D-glucosamine 6-phosphate (GlcN-6P) into beta-D-fructose 6-phosphate (Fru-6P) and ammonium ion, a regulatory reaction step in de novo uridine diphosphate-N-acetyl-alpha-D-glucosamine (UDP-GlcNAc) biosynthesis via hexosamine pathway. Deamination is coupled to aldo-keto isomerization mediating the metabolic flux from UDP-GlcNAc toward Fru-6P. At high ammonium level can drive amination and isomerization of Fru-6P toward hexosamines and UDP-GlcNAc synthesis. Has a role in fine tuning the metabolic fluctuations of cytosolic UDP-GlcNAc and their effects on hyaluronan synthesis that occur during tissue remodeling. Seems to trigger calcium oscillations in mammalian eggs. These oscillations serve as the essential trigger for egg activation and early development of the embryo. The chain is Glucosamine-6-phosphate deaminase 1 from Mesocricetus auratus (Golden hamster).